The following is a 582-amino-acid chain: Semenogelin-2 (582 aa).

The first 23 residues, 1–23 (MKSIILFVLSLLLILEKQAAVMG), serve as a signal peptide directing secretion. 3 disordered regions span residues 25-62 (KGGSKGQLSSGSSRFPHRHRSQHYSGQKDKQHTESKGS), 91-190 (HKTT…QGGS), and 272-553 (NLNQ…FSGA). Over residues 50–59 (GQKDKQHTES) the composition is skewed to basic and acidic residues. Over residues 92-134 (KTTKSKQHLRRHQRLLNYKQKGRGRVKPKRHFHLIVIHRKGGQ) the composition is skewed to basic residues. 2 stretches are compositionally biased toward polar residues: residues 137–161 (HGTQNPSQDQGNSPSGKGISSQYSN) and 174–190 (EQASASGAQKGRTQGGS). Basic and acidic residues predominate over residues 293 to 305 (TEERQPNHEEKSV). A compositionally biased stretch (polar residues) spans 325 to 335 (KSQNQVTIPSQ). The segment covering 336–345 (DQEHGHKENK) has biased composition (basic and acidic residues). Positions 385-395 (KSQNQVAIPSQ) are enriched in polar residues. The span at 396–405 (DQEHGHKENK) shows a compositional bias: basic and acidic residues. Positions 445 to 455 (KSQNQVTIPSQ) are enriched in polar residues. Residues 456 to 465 (DQEHGHKENK) show a composition bias toward basic and acidic residues. Composition is skewed to polar residues over residues 487–498 (KDVSQSSLSFQT) and 506–529 (SQIQTPNPNQGQWSGQNAKGNSGK). Basic and acidic residues predominate over residues 530 to 546 (SADRKQDLLSHEQEGRY).

This sequence belongs to the semenogelin family. Interacts with SERPINA5.

It localises to the secreted. Its function is as follows. Participates in the formation of a gel matrix (sperm coagulum) entrapping the accessory gland secretions and ejaculated spermatozoa. The protein is Semenogelin-2 (SEMG2) of Macaca fascicularis (Crab-eating macaque).